Consider the following 111-residue polypeptide: MAMPNFGDMMKQLQEAGAKMQDLQKQLEKLVSEGEAGGGMVRAKVNGRQKLLELTIDPEIMDDVDMVQDLVVAAVNKALEASAQLAQSEIQKAAGGMINPADLMKQFGGQG.

Belongs to the YbaB/EbfC family. In terms of assembly, homodimer.

Its subcellular location is the cytoplasm. The protein resides in the nucleoid. Functionally, binds to DNA and alters its conformation. May be involved in regulation of gene expression, nucleoid organization and DNA protection. This chain is Nucleoid-associated protein CT0805, found in Chlorobaculum tepidum (strain ATCC 49652 / DSM 12025 / NBRC 103806 / TLS) (Chlorobium tepidum).